A 398-amino-acid chain; its full sequence is Phosphomevalonate dehydratase large subunit (398 aa).

Residues Gly-48, Val-49, Ser-50, Asn-76, and Pro-77 each coordinate (R)-5-phosphomevalonate. Cys-116 lines the [4Fe-4S] cluster pocket. (R)-5-phosphomevalonate contacts are provided by Glu-136 and Ser-137. [4Fe-4S] cluster is bound by residues Cys-287 and Cys-342. Lys-361 serves as a coordination point for (R)-5-phosphomevalonate.

The protein belongs to the AcnX type II large subunit family. In terms of assembly, heterodimer composed of a large subunit (PMDh-L) and a small subunit (PMDh-S). [4Fe-4S] cluster is required as a cofactor.

The catalysed reaction is (R)-5-phosphomevalonate = (2E)-3-methyl-5-phosphooxypent-2-enoate + H2O. It functions in the pathway isoprenoid biosynthesis; isopentenyl diphosphate biosynthesis via mevalonate pathway. In terms of biological role, component of a hydro-lyase that catalyzes the dehydration of mevalonate 5-phosphate (MVA5P) to form trans-anhydromevalonate 5-phosphate (tAHMP). Involved in the archaeal mevalonate (MVA) pathway, which provides fundamental precursors for isoprenoid biosynthesis, such as isopentenyl diphosphate (IPP) and dimethylallyl diphosphate (DMAPP). The polypeptide is Phosphomevalonate dehydratase large subunit (Methanosarcina mazei (strain ATCC BAA-159 / DSM 3647 / Goe1 / Go1 / JCM 11833 / OCM 88) (Methanosarcina frisia)).